Consider the following 432-residue polypeptide: E3 ubiquitin-protein ligase RNF135 (432 aa).

Residues 21 to 63 form an RING-type zinc finger; that stretch reads CIICQGLLDWPATLPCGHSFCRHCLEALWGARDARRWACPTCR. The interval 95–121 is disordered; it reads GSDPAHCPCPGSSSLSSAAARPRRRPE. Low complexity predominate over residues 102–114; that stretch reads PCPGSSSLSSAAA. 2 coiled-coil regions span residues 121-156 and 191-216; these read ELQRVAVEKSITEVAQELTELVEHLVDIVRSLQNQR and DTAAGKIRDILHDLEEIQEKLQESVT. The region spanning 241–432 is the B30.2/SPRY domain; the sequence is PDQSHPALRR…NYLIIKQVKV (192 aa).

In terms of assembly, homodimer. Interacts (homodimer) with RIGI (double-stranded RNA-bound oligomeric form); involved in both RIGI ubiquitination, oligomerization into filaments associated with viral RNAs and the bridging of these filaments. Interacts with UBE2D3 and UBE2N; E2 ubiquitin ligases involved in RNF135-mediated ubiquitination of RIGI and activation of the RIG-I signaling pathway. Interacts with PCBP2. Post-translationally, (Microbial infection) Cleaved and inactivated by hepatitis C virus NS3/NS4A. As to expression, expressed in skeletal muscle, spleen, kidney, placenta, prostate, stomach, thyroid and tongue. Also weakly expressed in heart, thymus, liver and lung.

The protein localises to the cytoplasm. It localises to the stress granule. It catalyses the reaction S-ubiquitinyl-[E2 ubiquitin-conjugating enzyme]-L-cysteine + [acceptor protein]-L-lysine = [E2 ubiquitin-conjugating enzyme]-L-cysteine + N(6)-ubiquitinyl-[acceptor protein]-L-lysine.. The protein operates within protein modification; protein ubiquitination. Functionally, E2-dependent E3 ubiquitin-protein ligase that functions as a RIGI coreceptor in the sensing of viral RNAs in cell cytoplasm and the activation of the antiviral innate immune response. Together with the UBE2D3, UBE2N and UB2V1 E2 ligases, catalyzes the 'Lys-63'-linked polyubiquitination of RIGI oligomerized on viral RNAs, an essential step in the activation of the RIG-I signaling pathway. Through a ubiquitin-independent parallel mechanism, which consists in bridging RIGI filaments forming on longer viral RNAs, further activates the RIG-I signaling pathway. This second mechanism that synergizes with the ubiquitin-dependent one would thereby allow an RNA length-dependent regulation of the RIG-I signaling pathway. Associated with the E2 ligase UBE2N, also constitutively synthesizes unanchored 'Lys-63'-linked polyubiquitin chains that may also activate the RIG-I signaling pathway. This chain is E3 ubiquitin-protein ligase RNF135, found in Homo sapiens (Human).